A 756-amino-acid polypeptide reads, in one-letter code: Polyribonucleotide nucleotidyltransferase (756 aa).

Aspartate 547 and aspartate 553 together coordinate Mg(2+). The KH domain occupies 613 to 672 (PRITSVTIPVNKIGELIGPKGKTINAITEETGADVSIEEDGTVYISAATGEAADAAIDRV). The 70-residue stretch at 684 to 753 (GERFLGTVVK…NRGKISLVPV (70 aa)) folds into the S1 motif domain.

The protein belongs to the polyribonucleotide nucleotidyltransferase family. It depends on Mg(2+) as a cofactor.

It localises to the cytoplasm. It carries out the reaction RNA(n+1) + phosphate = RNA(n) + a ribonucleoside 5'-diphosphate. In terms of biological role, involved in mRNA degradation. Catalyzes the phosphorolysis of single-stranded polyribonucleotides processively in the 3'- to 5'-direction. This Corynebacterium aurimucosum (strain ATCC 700975 / DSM 44827 / CIP 107346 / CN-1) (Corynebacterium nigricans) protein is Polyribonucleotide nucleotidyltransferase.